We begin with the raw amino-acid sequence, 219 residues long: uncharacterized protein (219 aa).

A compositionally biased stretch (basic residues) spans 139–154; that stretch reads PRKIKQKKKTKKKRPS. Residues 139–160 are disordered; the sequence is PRKIKQKKKTKKKRPSKSAPKT. Residues 159–217 form the LysM domain; that stretch reads KTYTVKKGDTLWDLAGKFYGDSTKWRKIWKVNKKAMIKRSKRNIRQPGHWIFPGQKLKI.

This is an uncharacterized protein from Bacillus subtilis (strain 168).